Reading from the N-terminus, the 429-residue chain is Glutamate-1-semialdehyde 2,1-aminomutase 2 (429 aa).

At Lys267 the chain carries N6-(pyridoxal phosphate)lysine.

It belongs to the class-III pyridoxal-phosphate-dependent aminotransferase family. HemL subfamily. Homodimer. It depends on pyridoxal 5'-phosphate as a cofactor.

The protein localises to the cytoplasm. It catalyses the reaction (S)-4-amino-5-oxopentanoate = 5-aminolevulinate. It participates in porphyrin-containing compound metabolism; protoporphyrin-IX biosynthesis; 5-aminolevulinate from L-glutamyl-tRNA(Glu): step 2/2. The protein is Glutamate-1-semialdehyde 2,1-aminomutase 2 (gsaB) of Bacillus subtilis (strain 168).